Here is a 221-residue protein sequence, read N- to C-terminus: Deoxyribose-phosphate aldolase (221 aa).

Aspartate 90 (proton donor/acceptor) is an active-site residue. Lysine 152 acts as the Schiff-base intermediate with acetaldehyde in catalysis. The active-site Proton donor/acceptor is lysine 181.

This sequence belongs to the DeoC/FbaB aldolase family. DeoC type 1 subfamily.

The protein localises to the cytoplasm. The enzyme catalyses 2-deoxy-D-ribose 5-phosphate = D-glyceraldehyde 3-phosphate + acetaldehyde. Its pathway is carbohydrate degradation; 2-deoxy-D-ribose 1-phosphate degradation; D-glyceraldehyde 3-phosphate and acetaldehyde from 2-deoxy-alpha-D-ribose 1-phosphate: step 2/2. Functionally, catalyzes a reversible aldol reaction between acetaldehyde and D-glyceraldehyde 3-phosphate to generate 2-deoxy-D-ribose 5-phosphate. The polypeptide is Deoxyribose-phosphate aldolase (Exiguobacterium sp. (strain ATCC BAA-1283 / AT1b)).